A 475-amino-acid polypeptide reads, in one-letter code: Squamosa promoter-binding-like protein 12 (475 aa).

Positions 49 to 73 (NHGSTNSSGGTFTSSSELANGSSKS) are disordered. Residues 51-73 (GSTNSSGGTFTSSSELANGSSKS) show a composition bias toward low complexity. The segment at 177 to 254 (SSYCQVEGCK…SDHNARRRKP (78 aa)) adopts an SBP-type zinc-finger fold. 8 residues coordinate Zn(2+): C180, C185, C202, H205, C221, C224, H228, and C240. The Bipartite nuclear localization signal signature appears at 237–253 (KKSCRRRLSDHNARRRK). The interval 437-475 (GGGGFWQDGDDPPPLDHASQAQAFMHPGNGSSSGYGHLH) is disordered. The span at 465 to 475 (NGSSSGYGHLH) shows a compositional bias: polar residues.

In terms of tissue distribution, expressed in young panicles.

It localises to the nucleus. Its function is as follows. Trans-acting factor that binds specifically to the consensus nucleotide sequence 5'-TNCGTACAA-3'. May be involved in panicle development. The protein is Squamosa promoter-binding-like protein 12 (SPL12) of Oryza sativa subsp. indica (Rice).